The following is a 142-amino-acid chain: Lysozyme X (142 aa).

An N-terminal signal peptide occupies residues 1 to 19 (MRALLGICVLALVTPAVLG). Positions 20 to 142 (RTMDRCSLAR…YLPPIDDCFV (123 aa)) constitute a C-type lysozyme domain. 4 disulfides stabilise this stretch: Cys25/Cys140, Cys46/Cys130, Cys81/Cys97, and Cys93/Cys111. Active-site residues include Glu51 and Asp69.

Belongs to the glycosyl hydrolase 22 family. In terms of tissue distribution, found in the midgut.

It catalyses the reaction Hydrolysis of (1-&gt;4)-beta-linkages between N-acetylmuramic acid and N-acetyl-D-glucosamine residues in a peptidoglycan and between N-acetyl-D-glucosamine residues in chitodextrins.. Its function is as follows. Unlikely to play an active role in the humoral immune defense. May have a function in the digestion of bacteria in the food. May be involved in the clearance of bacteria from the larval gut before metamorphosis. This chain is Lysozyme X (LysX), found in Drosophila melanogaster (Fruit fly).